Here is a 335-residue protein sequence, read N- to C-terminus: Cell division protein ZipA (335 aa).

Topologically, residues 1–6 (MENLQL) are periplasmic. A helical membrane pass occupies residues 7 to 27 (VLFVLGAVAIIAVLVHGFWSI). Residues 28–335 (RRQQPKSLKE…SYLQRIRAQM (308 aa)) are Cytoplasmic-facing. Disordered regions lie at residues 37-128 (ESPM…NEEV) and 163-185 (RPAP…VSVE). Residues 170 to 185 (APQSVAPASVEPVSVE) show a composition bias toward low complexity.

It belongs to the ZipA family. As to quaternary structure, interacts with FtsZ via their C-terminal domains.

Its subcellular location is the cell inner membrane. Functionally, essential cell division protein that stabilizes the FtsZ protofilaments by cross-linking them and that serves as a cytoplasmic membrane anchor for the Z ring. Also required for the recruitment to the septal ring of downstream cell division proteins. The protein is Cell division protein ZipA of Shewanella loihica (strain ATCC BAA-1088 / PV-4).